The following is a 348-amino-acid chain: Selenide, water dikinase (348 aa).

Cys17 is an active-site residue. ATP is bound by residues Lys20 and 48 to 50; that span reads TRD. Asp51 contacts Mg(2+). ATP contacts are provided by residues Asp68, Asp91, and 139 to 141; that span reads GHS. Asp91 is a binding site for Mg(2+). Residue Asp227 participates in Mg(2+) binding.

Belongs to the selenophosphate synthase 1 family. Class I subfamily. As to quaternary structure, homodimer. Mg(2+) serves as cofactor.

The catalysed reaction is hydrogenselenide + ATP + H2O = selenophosphate + AMP + phosphate + 2 H(+). Synthesizes selenophosphate from selenide and ATP. In Yersinia pseudotuberculosis serotype I (strain IP32953), this protein is Selenide, water dikinase.